The primary structure comprises 431 residues: Histidinol dehydrogenase (431 aa).

NAD(+) contacts are provided by Tyr129, Gln191, and Asn214. 3 residues coordinate substrate: Ser237, Gln259, and His262. Residues Gln259 and His262 each coordinate Zn(2+). Residues Glu327 and His328 each act as proton acceptor in the active site. Substrate contacts are provided by His328, Asp361, Glu415, and His420. Zn(2+) is bound at residue Asp361. His420 provides a ligand contact to Zn(2+).

It belongs to the histidinol dehydrogenase family. The cofactor is Zn(2+).

It carries out the reaction L-histidinol + 2 NAD(+) + H2O = L-histidine + 2 NADH + 3 H(+). Its pathway is amino-acid biosynthesis; L-histidine biosynthesis; L-histidine from 5-phospho-alpha-D-ribose 1-diphosphate: step 9/9. Catalyzes the sequential NAD-dependent oxidations of L-histidinol to L-histidinaldehyde and then to L-histidine. In Lactococcus lactis subsp. lactis (strain IL1403) (Streptococcus lactis), this protein is Histidinol dehydrogenase (hisD).